Reading from the N-terminus, the 380-residue chain is 3-isopropylmalate dehydratase large subunit (380 aa).

[4Fe-4S] cluster is bound by residues cysteine 262, cysteine 320, and cysteine 323.

This sequence belongs to the aconitase/IPM isomerase family. LeuC type 2 subfamily. Heterodimer of LeuC and LeuD. It depends on [4Fe-4S] cluster as a cofactor.

The enzyme catalyses (2R,3S)-3-isopropylmalate = (2S)-2-isopropylmalate. It participates in amino-acid biosynthesis; L-leucine biosynthesis; L-leucine from 3-methyl-2-oxobutanoate: step 2/4. Catalyzes the isomerization between 2-isopropylmalate and 3-isopropylmalate, via the formation of 2-isopropylmaleate. This is 3-isopropylmalate dehydratase large subunit from Thermococcus kodakarensis (strain ATCC BAA-918 / JCM 12380 / KOD1) (Pyrococcus kodakaraensis (strain KOD1)).